A 313-amino-acid polypeptide reads, in one-letter code: Protein TIFY 4A (313 aa).

Positions 118–149 are disordered; it reads SPRSAEFSGGSGHFVSEKDGHKTTISPRSPAE. The 36-residue stretch at 150-185 folds into the Tify domain; the sequence is TSELVGQMTIFYSGKVNVYDGIPPEKARSIMHFAAN. Disordered stretches follow at residues 220 to 256 and 281 to 313; these read KANS…KAKK and QNLG…SEGI. Positions 232–254 match the Jas motif; that stretch reads QANRKVSLQRYREKRKDRKFSKA. The short motif at 234–241 is the Nuclear localization signal element; it reads NRKVSLQR. A compositionally biased stretch (basic residues) spans 243–256; the sequence is REKRKDRKFSKAKK.

It belongs to the TIFY/JAZ family. As to quaternary structure, interacts with AFPH2/NINJA.

The protein resides in the nucleus. Its function is as follows. Regulates the arrest of dispersed meristematic cells during lamina development. The polypeptide is Protein TIFY 4A (TIFY4A) (Arabidopsis thaliana (Mouse-ear cress)).